The primary structure comprises 226 residues: MIERIKKFLRTKFKPLLLLLVTVILYNGWTPHLGIFPPTFYDFAFNYYGFVDILTFLVIIVIAYKNDAFKKIFDIFRPKNLLFILFFIVGGNIFIALAHHLYFQMTPALEAFPEHSIDLANYFARTPFWTHSLDLFVIGPISEELIYREYLYRLFDKKCLACFVSVTMFAWVHTGFTYSFFLYLPISLVVTLAYHRRKAIGESIALHSSINLINTYLPNLLSFWVF.

5 helical membrane-spanning segments follow: residues 16 to 36 (LLLL…LGIF), 43 to 63 (FAFN…IVIA), 81 to 101 (LLFI…AHHL), 169 to 189 (FAWV…ISLV), and 206 to 226 (LHSS…FWVF).

The protein belongs to the UPF0177 family.

The protein resides in the cell membrane. The protein is UPF0177 protein YbdJ (ybdJ) of Lactococcus lactis subsp. lactis (strain IL1403) (Streptococcus lactis).